Reading from the N-terminus, the 78-residue chain is Large ribosomal subunit protein bL28 (78 aa).

Belongs to the bacterial ribosomal protein bL28 family.

The sequence is that of Large ribosomal subunit protein bL28 from Flavobacterium johnsoniae (strain ATCC 17061 / DSM 2064 / JCM 8514 / BCRC 14874 / CCUG 350202 / NBRC 14942 / NCIMB 11054 / UW101) (Cytophaga johnsonae).